The chain runs to 163 residues: Early nodulin-like protein 20 (163 aa).

The N-terminal stretch at 1–25 is a signal peptide; sequence MMGKYLWALVYVTVMILIIVVEVES. Positions 26–126 constitute a Phytocyanin domain; the sequence is SLHRVGGGRY…GMKLAITVLP (101 aa). N-linked (GlcNAc...) asparagine glycosylation is found at Asn-42, Asn-63, Asn-73, Asn-88, and Asn-135. Residues Cys-80 and Cys-114 are joined by a disulfide bond. Ser-138 is lipidated: GPI-anchor amidated serine. The propeptide at 139–163 is removed in mature form; that stretch reads TTTPLIPPNAITAAILIFAFKALLL.

This sequence belongs to the early nodulin-like (ENODL) family.

Its subcellular location is the cell membrane. In terms of biological role, may act as a carbohydrate transporter. This chain is Early nodulin-like protein 20, found in Arabidopsis thaliana (Mouse-ear cress).